The primary structure comprises 343 residues: MNKEALVQVAEEVRRATGLPVGWRDVERTLGALRATRDLWEAVRLSRVPLRFLVPIWEGLARRGLLRVEEGLDLLAEVPAPRPGEAACPACEGRGLVGERLPGRAAERFLAWAKERPEAIQDFDQGYVTPESTLARVALAWNWGDLEGKEVLVLGDDDLTGLAAALTGLPKRVVVLDADPRIVRFLERAAKAEGLPLEAHVHDLREPLPEAWVHAFHTFFTDPVEGPLGLQAFVGRGLLALEGEGCAGYVGLTHVEASLAKWADFQRFLLENGAVITELRDGFHVYENWGYIEQMRAWPWLPVKRRPEKPWYTSALIRLELLRRADLENARVEGDLQDEEATY.

Belongs to the branched-chain polyamine synthase family.

The protein resides in the cytoplasm. It carries out the reaction 2 S-adenosyl 3-(methylsulfanyl)propylamine + spermidine = N(4)-bis(aminopropyl)spermidine + 2 S-methyl-5'-thioadenosine + 2 H(+). It functions in the pathway amine and polyamine biosynthesis. Involved in the biosynthesis of branched-chain polyamines, which support the growth of thermophiles under high-temperature conditions. Catalyzes the sequential condensation of spermidine with the aminopropyl groups of decarboxylated S-adenosylmethionines to produce N(4)-bis(aminopropyl)spermidine via N(4)-aminopropylspermidine. This is N(4)-bis(aminopropyl)spermidine synthase from Thermus thermophilus.